The primary structure comprises 83 residues: Large ribosomal subunit protein eL43 (83 aa).

Zn(2+) contacts are provided by C38, C41, C56, and C59. A C4-type zinc finger spans residues 38-59 (CKKCGKKAVKRSGTGIWECRHC).

The protein belongs to the eukaryotic ribosomal protein eL43 family. Putative zinc-binding subfamily. In terms of assembly, part of the 50S ribosomal subunit. The cofactor is Zn(2+).

Its function is as follows. Binds to the 23S rRNA. In Archaeoglobus fulgidus (strain ATCC 49558 / DSM 4304 / JCM 9628 / NBRC 100126 / VC-16), this protein is Large ribosomal subunit protein eL43.